An 86-amino-acid polypeptide reads, in one-letter code: Small ribosomal subunit protein bS20 (86 aa).

Positions 1–27 (MANSKSAKKRAIQAEKRRQHNASRRSM) are enriched in basic residues. Positions 1–28 (MANSKSAKKRAIQAEKRRQHNASRRSMM) are disordered.

The protein belongs to the bacterial ribosomal protein bS20 family.

Its function is as follows. Binds directly to 16S ribosomal RNA. This chain is Small ribosomal subunit protein bS20, found in Vibrio parahaemolyticus serotype O3:K6 (strain RIMD 2210633).